Consider the following 360-residue polypeptide: UPF0496 protein At3g19250 (360 aa).

The tract at residues M1–S29 is disordered. 2 helical membrane passes run H205–S225 and I229–L249.

It belongs to the UPF0496 family.

It is found in the membrane. The chain is UPF0496 protein At3g19250 from Arabidopsis thaliana (Mouse-ear cress).